The chain runs to 166 residues: Myosin regulatory light chain 2, ventricular/cardiac muscle isoform (166 aa).

Ser2 is subject to N,N,N-trimethylserine. A phosphoserine mark is found at Ser14, Ser15, and Ser19. 3 EF-hand domains span residues 24–59 (TQIQEFKEAFTIMDQNRDGFIDKNDLRDTFAALGRV), 94–129 (DPEETILNAFKVFDPEGKGSLKADYVREMLTTQAER), and 130–165 (FSKEEIDQMFAAFPPDVTGNLDYKNLVHIITHGEEK). Ca(2+)-binding residues include Asp37, Asn39, Asp41, and Asp48. At Thr52 the chain carries Phosphothreonine.

Myosin is a hexamer of 2 heavy chains and 4 light chains. Interacts with MYOC. In terms of processing, N-terminus is methylated by METTL11A/NTM1. Phosphorylated by MYLK3 and MYLK2; promotes cardiac muscle contraction and function. Dephosphorylated by PPP1CB complexed to PPP1R12B. The phosphorylated form in adult is expressed as gradients across the heart from endocardium (low phosphorylation) to epicardium (high phosphorylation); regulates cardiac torsion and workload distribution. Abundantly expressed in both cardiac and slow skeletal muscle (soleus), with no detectable expression in fast skeletal muscle (vastus lateralis) or non-muscle tissue.

It localises to the cytoplasm. The protein resides in the myofibril. Its subcellular location is the sarcomere. It is found in the a band. Functionally, contractile protein that plays a role in heart development and function. Following phosphorylation, plays a role in cross-bridge cycling kinetics and cardiac muscle contraction by increasing myosin lever arm stiffness and promoting myosin head diffusion; as a consequence of the increase in maximum contraction force and calcium sensitivity of contraction force. These events altogether slow down myosin kinetics and prolong duty cycle resulting in accumulated myosins being cooperatively recruited to actin binding sites to sustain thin filament activation as a means to fine-tune myofilament calcium sensitivity to force. During cardiogenesis plays an early role in cardiac contractility by promoting cardiac myofibril assembly. The sequence is that of Myosin regulatory light chain 2, ventricular/cardiac muscle isoform from Rattus norvegicus (Rat).